A 298-amino-acid polypeptide reads, in one-letter code: tRNA pseudouridine synthase B (298 aa).

Catalysis depends on D39, which acts as the Nucleophile.

It belongs to the pseudouridine synthase TruB family. Type 1 subfamily.

It catalyses the reaction uridine(55) in tRNA = pseudouridine(55) in tRNA. Responsible for synthesis of pseudouridine from uracil-55 in the psi GC loop of transfer RNAs. The chain is tRNA pseudouridine synthase B from Oenococcus oeni (strain ATCC BAA-331 / PSU-1).